We begin with the raw amino-acid sequence, 218 residues long: Glycerol-3-phosphate acyltransferase 2 (218 aa).

Helical transmembrane passes span 6–26, 50–70, 85–105, 115–135, and 159–179; these read YLLI…VLVG, VMGP…GTLA, LLLI…FLKF, AGVF…VFLP, and FWFH…LLFV.

Belongs to the PlsY family. In terms of assembly, probably interacts with PlsX.

Its subcellular location is the cell membrane. The catalysed reaction is an acyl phosphate + sn-glycerol 3-phosphate = a 1-acyl-sn-glycero-3-phosphate + phosphate. It functions in the pathway lipid metabolism; phospholipid metabolism. Its function is as follows. Catalyzes the transfer of an acyl group from acyl-phosphate (acyl-PO(4)) to glycerol-3-phosphate (G3P) to form lysophosphatidic acid (LPA). This enzyme utilizes acyl-phosphate as fatty acyl donor, but not acyl-CoA or acyl-ACP. The chain is Glycerol-3-phosphate acyltransferase 2 from Lactobacillus johnsonii (strain CNCM I-12250 / La1 / NCC 533).